The chain runs to 408 residues: LL-diaminopimelate aminotransferase (408 aa).

Residues Y15 and G42 each contribute to the substrate site. Pyridoxal 5'-phosphate contacts are provided by residues Y72, S108–K109, Y132, N187, Y218, and S246–S248. Substrate-binding residues include K109, Y132, and N187. Position 249 is an N6-(pyridoxal phosphate)lysine (K249). Residues R257 and N292 each contribute to the pyridoxal 5'-phosphate site. Positions 292 and 388 each coordinate substrate.

Belongs to the class-I pyridoxal-phosphate-dependent aminotransferase family. LL-diaminopimelate aminotransferase subfamily. In terms of assembly, homodimer. It depends on pyridoxal 5'-phosphate as a cofactor.

It catalyses the reaction (2S,6S)-2,6-diaminopimelate + 2-oxoglutarate = (S)-2,3,4,5-tetrahydrodipicolinate + L-glutamate + H2O + H(+). It participates in amino-acid biosynthesis; L-lysine biosynthesis via DAP pathway; LL-2,6-diaminopimelate from (S)-tetrahydrodipicolinate (aminotransferase route): step 1/1. In terms of biological role, involved in the synthesis of meso-diaminopimelate (m-DAP or DL-DAP), required for both lysine and peptidoglycan biosynthesis. Catalyzes the direct conversion of tetrahydrodipicolinate to LL-diaminopimelate. In Prochlorococcus marinus (strain MIT 9515), this protein is LL-diaminopimelate aminotransferase.